The sequence spans 57 residues: Conotoxin Cal6.39 (57 aa).

The N-terminal stretch at 1–18 is a signal peptide; that stretch reads MSGTTVLLLTCLFLVTMA. 3 disulfides stabilise this stretch: Cys-22/Cys-36, Cys-29/Cys-46, and Cys-35/Cys-52.

Expressed by the venom duct.

Its subcellular location is the secreted. Functionally, probable neurotoxin. The protein is Conotoxin Cal6.39 of Californiconus californicus (California cone).